The following is a 342-amino-acid chain: tRNA dimethylallyltransferase (342 aa).

39 to 46 contributes to the ATP binding site; it reads GPTGSGKT. Substrate is bound at residue 41–46; that stretch reads TGSGKT. The tract at residues 64 to 67 is interaction with substrate tRNA; it reads DSMQ.

The protein belongs to the IPP transferase family. Monomer. It depends on Mg(2+) as a cofactor.

It carries out the reaction adenosine(37) in tRNA + dimethylallyl diphosphate = N(6)-dimethylallyladenosine(37) in tRNA + diphosphate. Catalyzes the transfer of a dimethylallyl group onto the adenine at position 37 in tRNAs that read codons beginning with uridine, leading to the formation of N6-(dimethylallyl)adenosine (i(6)A). This chain is tRNA dimethylallyltransferase, found in Chlamydia caviae (strain ATCC VR-813 / DSM 19441 / 03DC25 / GPIC) (Chlamydophila caviae).